The chain runs to 127 residues: Large ribosomal subunit protein bL17 (127 aa).

Belongs to the bacterial ribosomal protein bL17 family. In terms of assembly, part of the 50S ribosomal subunit. Contacts protein L32.

This chain is Large ribosomal subunit protein bL17, found in Salmonella paratyphi A (strain AKU_12601).